The sequence spans 449 residues: Bifunctional protein GlmU (449 aa).

The interval 1–228 (MSTALVILAA…EAETLGINSR (228 aa)) is pyrophosphorylase. UDP-N-acetyl-alpha-D-glucosamine contacts are provided by residues 8–11 (LAAG), Lys-22, Gln-75, 80–81 (GT), 103–105 (YGD), Gly-140, Glu-154, Asn-169, and Asn-226. Asp-105 provides a ligand contact to Mg(2+). Position 226 (Asn-226) interacts with Mg(2+). The tract at residues 229–249 (ADLAAAEAVFQAHARAELLDI) is linker. Residues 250–449 (GVTLTAPETV…RAKKAAKAKG (200 aa)) are N-acetyltransferase. Arg-315 and Lys-333 together coordinate UDP-N-acetyl-alpha-D-glucosamine. Catalysis depends on His-345, which acts as the Proton acceptor. 2 residues coordinate UDP-N-acetyl-alpha-D-glucosamine: Tyr-348 and Asn-359. Acetyl-CoA contacts are provided by residues Ala-362, 368 to 369 (NY), Ser-387, Thr-405, and Arg-422.

In the N-terminal section; belongs to the N-acetylglucosamine-1-phosphate uridyltransferase family. It in the C-terminal section; belongs to the transferase hexapeptide repeat family. In terms of assembly, homotrimer. Mg(2+) is required as a cofactor.

Its subcellular location is the cytoplasm. It carries out the reaction alpha-D-glucosamine 1-phosphate + acetyl-CoA = N-acetyl-alpha-D-glucosamine 1-phosphate + CoA + H(+). The enzyme catalyses N-acetyl-alpha-D-glucosamine 1-phosphate + UTP + H(+) = UDP-N-acetyl-alpha-D-glucosamine + diphosphate. The protein operates within nucleotide-sugar biosynthesis; UDP-N-acetyl-alpha-D-glucosamine biosynthesis; N-acetyl-alpha-D-glucosamine 1-phosphate from alpha-D-glucosamine 6-phosphate (route II): step 2/2. It functions in the pathway nucleotide-sugar biosynthesis; UDP-N-acetyl-alpha-D-glucosamine biosynthesis; UDP-N-acetyl-alpha-D-glucosamine from N-acetyl-alpha-D-glucosamine 1-phosphate: step 1/1. It participates in bacterial outer membrane biogenesis; LPS lipid A biosynthesis. Catalyzes the last two sequential reactions in the de novo biosynthetic pathway for UDP-N-acetylglucosamine (UDP-GlcNAc). The C-terminal domain catalyzes the transfer of acetyl group from acetyl coenzyme A to glucosamine-1-phosphate (GlcN-1-P) to produce N-acetylglucosamine-1-phosphate (GlcNAc-1-P), which is converted into UDP-GlcNAc by the transfer of uridine 5-monophosphate (from uridine 5-triphosphate), a reaction catalyzed by the N-terminal domain. The polypeptide is Bifunctional protein GlmU (Ruegeria sp. (strain TM1040) (Silicibacter sp.)).